The chain runs to 401 residues: Argininosuccinate synthase (401 aa).

Residues Ala-10–Ser-18 and Ala-38 contribute to the ATP site. Residue Tyr-89 participates in L-citrulline binding. Gly-119 is an ATP binding site. Thr-121, Asn-125, and Asp-126 together coordinate L-aspartate. Residue Asn-125 coordinates L-citrulline. L-citrulline contacts are provided by Arg-129, Ser-177, Ser-186, Glu-262, and Tyr-274.

Belongs to the argininosuccinate synthase family. Type 1 subfamily. In terms of assembly, homotetramer.

The protein localises to the cytoplasm. It carries out the reaction L-citrulline + L-aspartate + ATP = 2-(N(omega)-L-arginino)succinate + AMP + diphosphate + H(+). It participates in amino-acid biosynthesis; L-arginine biosynthesis; L-arginine from L-ornithine and carbamoyl phosphate: step 2/3. The protein is Argininosuccinate synthase of Synechococcus sp. (strain WH7803).